The chain runs to 343 residues: MKKHLNTLFVTTQGSYLSKEGECVLISIDRVEKTRIPLHMLNGIVCFGQVSCSPFLLGHCAQLGVAVTFLTEHGRFLCQMQGPVKGNILLRRAQYRMADNYDQTATLARLFVIGKIGNARVTLARALRDHPEKTDGEKLKNAQHVLAGCIRRLQEATDQELIRGIEGEAAKAYFSVFDECITADDPAFRFEGRSRRPPLDRVNCLLSFVYTLMTHDIRSALESCGLDPAAGFLHKDRPGRPSLALDMLEEFRSYIGDRLVLSLINRGQIHAKDFDISETGAVAMKDDARKTLITAYQQRKQEEIEHPFVGEKMAVGLLWHMQAMLLARYIRGDIDMYPPFVWR.

3 residues coordinate Mn(2+): Glu-166, His-234, and Glu-249.

This sequence belongs to the CRISPR-associated endonuclease Cas1 family. As to quaternary structure, homodimer, forms a heterotetramer with a Cas2 homodimer. Mg(2+) serves as cofactor. Mn(2+) is required as a cofactor.

CRISPR (clustered regularly interspaced short palindromic repeat), is an adaptive immune system that provides protection against mobile genetic elements (viruses, transposable elements and conjugative plasmids). CRISPR clusters contain spacers, sequences complementary to antecedent mobile elements, and target invading nucleic acids. CRISPR clusters are transcribed and processed into CRISPR RNA (crRNA). Acts as a dsDNA endonuclease. Involved in the integration of spacer DNA into the CRISPR cassette. This is CRISPR-associated endonuclease Cas1 1 from Chlorobaculum tepidum (strain ATCC 49652 / DSM 12025 / NBRC 103806 / TLS) (Chlorobium tepidum).